Reading from the N-terminus, the 225-residue chain is Uridylate kinase (225 aa).

9-10 (GS) serves as a coordination point for ATP. G46 is a binding site for UMP. Residues G47 and R51 each contribute to the ATP site. UMP contacts are provided by residues D67 and 115–121 (THPAHTT). Residues T141, N142, Y147, and D150 each contribute to the ATP site.

The protein belongs to the UMP kinase family. In terms of assembly, homohexamer.

The protein resides in the cytoplasm. It catalyses the reaction UMP + ATP = UDP + ADP. The protein operates within pyrimidine metabolism; CTP biosynthesis via de novo pathway; UDP from UMP (UMPK route): step 1/1. Its activity is regulated as follows. Inhibited by UTP. In terms of biological role, catalyzes the reversible phosphorylation of UMP to UDP. The sequence is that of Uridylate kinase from Methanococcus aeolicus (strain ATCC BAA-1280 / DSM 17508 / OCM 812 / Nankai-3).